The following is a 235-amino-acid chain: Probable WRKY transcription factor 66 (235 aa).

The segment at residues 79–147 (SPTPAHIDGF…YVGQHACEAP (69 aa)) is a DNA-binding region (WRKY).

This sequence belongs to the WRKY group III family.

It localises to the nucleus. Its function is as follows. Transcription factor. Interacts specifically with the W box (5'-(T)TGAC[CT]-3'), a frequently occurring elicitor-responsive cis-acting element. This is Probable WRKY transcription factor 66 (WRKY66) from Arabidopsis thaliana (Mouse-ear cress).